The chain runs to 658 residues: Gametogenetin (658 aa).

Disordered regions lie at residues 1 to 268 and 285 to 584; these read MGNV…ASGG and KQGP…SNKG. Residues 14–30 show a composition bias toward basic and acidic residues; sequence SRKEQASDRASDSRRTP. The segment covering 54–83 has biased composition (low complexity); sequence PGSSGPPGLLIPPESQASSSTLPLTLELPS. An interaction with GGNBP1 region spans residues 127–491; that stretch reads RGLLEASHRG…APTPPSTLSP (365 aa). A compositionally biased stretch (pro residues) spans 163-188; the sequence is PAPPPTPLEPRKQLPPAPSTCDPQPP. A compositionally biased stretch (polar residues) spans 194-204; it reads LASSATSPTES. The span at 252-264 shows a compositional bias: low complexity; the sequence is SSSGPLAAKASLG. Serine 384 is subject to Phosphoserine. Positions 398–409 are enriched in low complexity; it reads PRRPTPALLAPP. Pro residues predominate over residues 423–460; it reads RPVPPSPQQIPPLPPPPPTPPATPPPAPPPTPQPPALP. The span at 489 to 516 shows a compositional bias: low complexity; that stretch reads LSPTAAAEQAPAPTPAPVTSQVPATTTA. The interactions with ZNF403/GGNBP2 and OAZ3 stretch occupies residues 496–658; that stretch reads EQAPAPTPAP…HYDLQATHST (163 aa). Positions 527–536 are enriched in basic residues; sequence IRTRRNKGPR.

As to quaternary structure, interacts with FANCL, GGNBP1 and ZNF403/GGNBP2.

Functionally, may be involved in spermatogenesis. This chain is Gametogenetin (Ggn), found in Rattus norvegicus (Rat).